We begin with the raw amino-acid sequence, 676 residues long: RNA helicase NPH-II (676 aa).

Positions 172–347 (FLAWISHRPV…IFLPNPAFIH (176 aa)) constitute a Helicase ATP-binding domain. 185–192 (GGTGVGKT) is a binding site for ATP. The DEXH box motif lies at 296-299 (DEVH). In terms of domain architecture, Helicase C-terminal spans 366–535 (NPSSRMAYIE…NYILYANKFN (170 aa)).

Belongs to the DEAD box helicase family. DEAH subfamily. In terms of assembly, monomer.

The protein resides in the virion. The catalysed reaction is ATP + H2O = ADP + phosphate + H(+). Functionally, NTP-dependent helicase that catalyzes unidirectional unwinding of 3'tailed duplex RNAs and plays an important role during transcription of early mRNAs, presumably by preventing R-loop formation behind the elongating RNA polymerase. Might also play a role in the export of newly synthesized mRNA chains out of the core into the cytoplasm. Required for replication and propagation of viral particles. The polypeptide is RNA helicase NPH-II (OPG084) (Monkeypox virus).